A 529-amino-acid chain; its full sequence is Bifunctional purine biosynthesis protein PurH (529 aa).

Residues 1 to 148 enclose the MGS-like domain; sequence MQQRRPIRRA…KNHKDVAIVV (148 aa).

It belongs to the PurH family.

The catalysed reaction is (6R)-10-formyltetrahydrofolate + 5-amino-1-(5-phospho-beta-D-ribosyl)imidazole-4-carboxamide = 5-formamido-1-(5-phospho-D-ribosyl)imidazole-4-carboxamide + (6S)-5,6,7,8-tetrahydrofolate. It carries out the reaction IMP + H2O = 5-formamido-1-(5-phospho-D-ribosyl)imidazole-4-carboxamide. Its pathway is purine metabolism; IMP biosynthesis via de novo pathway; 5-formamido-1-(5-phospho-D-ribosyl)imidazole-4-carboxamide from 5-amino-1-(5-phospho-D-ribosyl)imidazole-4-carboxamide (10-formyl THF route): step 1/1. It functions in the pathway purine metabolism; IMP biosynthesis via de novo pathway; IMP from 5-formamido-1-(5-phospho-D-ribosyl)imidazole-4-carboxamide: step 1/1. This is Bifunctional purine biosynthesis protein PurH from Yersinia pseudotuberculosis serotype IB (strain PB1/+).